Consider the following 409-residue polypeptide: Tyrosine--tRNA ligase (409 aa).

An L-tyrosine-binding site is contributed by tyrosine 39. Positions 44 to 53 (PTAPSLHVGS) match the 'HIGH' region motif. The L-tyrosine site is built by tyrosine 176 and glutamine 180. Positions 236–240 (KMGKT) match the 'KMSKS' region motif. ATP is bound at residue lysine 239. Positions 346-409 (IGIVDALVGL…KKKHGILRKA (64 aa)) constitute an S4 RNA-binding domain.

It belongs to the class-I aminoacyl-tRNA synthetase family. TyrS type 1 subfamily. In terms of assembly, homodimer.

It is found in the cytoplasm. The catalysed reaction is tRNA(Tyr) + L-tyrosine + ATP = L-tyrosyl-tRNA(Tyr) + AMP + diphosphate + H(+). Functionally, catalyzes the attachment of tyrosine to tRNA(Tyr) in a two-step reaction: tyrosine is first activated by ATP to form Tyr-AMP and then transferred to the acceptor end of tRNA(Tyr). The chain is Tyrosine--tRNA ligase from Novosphingobium aromaticivorans (strain ATCC 700278 / DSM 12444 / CCUG 56034 / CIP 105152 / NBRC 16084 / F199).